The following is a 95-amino-acid chain: Cerebratulus toxin A-III (95 aa).

Cystine bridges form between C17–C38, C23–C34, and C48–C61.

This sequence belongs to the worm cytolysin family.

It is found in the secreted. Permeabilizes a variety of cells. Forms large pores which allows the release of large proteins almost as rapidly as small organic molecules and inorganic ions. At sublytic concentrations, the toxin also inhibits protein kinase C and endogenous voltage-gated cation selective (sodium, calcium) channels occurring in the nervous and cardiovascular systems. This is Cerebratulus toxin A-III from Cerebratulus lacteus (Milky ribbon worm).